Here is a 218-residue protein sequence, read N- to C-terminus: 3,4-dihydroxy-2-butanone 4-phosphate synthase (218 aa).

D-ribulose 5-phosphate contacts are provided by residues 38–39, Asp43, 151–155, and Glu175; these read RE and RRGHT. Position 39 (Glu39) interacts with Mg(2+). Position 154 (His154) interacts with Mg(2+).

Belongs to the DHBP synthase family. Homodimer. Mg(2+) serves as cofactor. Mn(2+) is required as a cofactor.

The catalysed reaction is D-ribulose 5-phosphate = (2S)-2-hydroxy-3-oxobutyl phosphate + formate + H(+). The protein operates within cofactor biosynthesis; riboflavin biosynthesis; 2-hydroxy-3-oxobutyl phosphate from D-ribulose 5-phosphate: step 1/1. Its function is as follows. Catalyzes the conversion of D-ribulose 5-phosphate to formate and 3,4-dihydroxy-2-butanone 4-phosphate. This is 3,4-dihydroxy-2-butanone 4-phosphate synthase from Vibrio atlanticus (strain LGP32) (Vibrio splendidus (strain Mel32)).